A 409-amino-acid polypeptide reads, in one-letter code: Multifunctional CCA protein (409 aa).

ATP is bound by residues G8 and R11. Residues G8 and R11 each coordinate CTP. The Mg(2+) site is built by E21 and D23. Residues R91, R137, and R140 each contribute to the ATP site. Positions 91, 137, and 140 each coordinate CTP. One can recognise an HD domain in the interval 228–329 (TGVHTLMVLT…LKALEGLDAF (102 aa)).

It belongs to the tRNA nucleotidyltransferase/poly(A) polymerase family. Bacterial CCA-adding enzyme type 1 subfamily. As to quaternary structure, monomer. Can also form homodimers and oligomers. Mg(2+) serves as cofactor. Requires Ni(2+) as cofactor.

It carries out the reaction a tRNA precursor + 2 CTP + ATP = a tRNA with a 3' CCA end + 3 diphosphate. The catalysed reaction is a tRNA with a 3' CCA end + 2 CTP + ATP = a tRNA with a 3' CCACCA end + 3 diphosphate. Its function is as follows. Catalyzes the addition and repair of the essential 3'-terminal CCA sequence in tRNAs without using a nucleic acid template. Adds these three nucleotides in the order of C, C, and A to the tRNA nucleotide-73, using CTP and ATP as substrates and producing inorganic pyrophosphate. tRNA 3'-terminal CCA addition is required both for tRNA processing and repair. Also involved in tRNA surveillance by mediating tandem CCA addition to generate a CCACCA at the 3' terminus of unstable tRNAs. While stable tRNAs receive only 3'-terminal CCA, unstable tRNAs are marked with CCACCA and rapidly degraded. This is Multifunctional CCA protein from Thioalkalivibrio sulfidiphilus (strain HL-EbGR7).